The primary structure comprises 407 residues: Polygalacturonase (407 aa).

The N-terminal stretch at 1 to 26 (MAPHLNIVPSMFVLLLLFISASKVQP) is a signal peptide. 2 PbH1 repeats span residues 180–206 (CKNITLERLKIEAPDESPNTDGIHMGK) and 207–228 (SEGVNIIASDIKTGDDCISIGD). Asparagine 182 carries an N-linked (GlcNAc...) asparagine glycan. The active-site Proton donor is the aspartate 221. Cysteines 223 and 240 form a disulfide. Residue histidine 244 is part of the active site. 2 PbH1 repeats span residues 260–281 (VEGIKISNCTITNTSNGARIKT) and 290–311 (VSEIHFEDITMNNVSSPILIDQ). N-linked (GlcNAc...) asparagine glycans are attached at residues asparagine 267, asparagine 272, asparagine 302, and asparagine 331. 2 cysteine pairs are disulfide-bonded: cysteine 351-cysteine 357 and cysteine 379-cysteine 395. A PbH1 5 repeat occupies 357–384 (CQNVELADIDIQHNGAEPATSQCLNVKP).

It belongs to the glycosyl hydrolase 28 family. Pollen.

The protein localises to the secreted. It localises to the cell wall. The catalysed reaction is (1,4-alpha-D-galacturonosyl)n+m + H2O = (1,4-alpha-D-galacturonosyl)n + (1,4-alpha-D-galacturonosyl)m.. May function in the depolymerization of the pectin in its walls during pollen tube elongation, or in that of the pistil during pollination. This chain is Polygalacturonase (G9), found in Gossypium barbadense (Sea Island cotton).